The chain runs to 65 residues: Beta-defensin 17 (65 aa).

The signal sequence occupies residues 1–19; that stretch reads MKFHLLFFILLFSITILTG. 3 disulfides stabilise this stretch: cysteine 35–cysteine 63, cysteine 42–cysteine 56, and cysteine 46–cysteine 64.

Belongs to the beta-defensin family.

The protein resides in the secreted. Functionally, has antibacterial activity. This chain is Beta-defensin 17 (Defb17), found in Rattus norvegicus (Rat).